A 750-amino-acid polypeptide reads, in one-letter code: Photosystem I P700 chlorophyll a apoprotein A1 (750 aa).

8 helical membrane-spanning segments follow: residues 70–93 (VFSA…FHGA), 156–179 (LYCT…FHYH), 195–219 (LNHH…HVSL), 291–309 (IAHH…GHMY), 346–369 (WHAQ…HHMY), 385–411 (LSLF…IFMV), 433–455 (AIIS…LYIH), and 531–549 (FLVH…LILL). [4Fe-4S] cluster is bound by residues Cys573 and Cys582. A run of 2 helical transmembrane segments spans residues 589–610 (HVFL…HFSW) and 664–686 (LSAY…MFLF). His675 is a chlorophyll a' binding site. The chlorophyll a site is built by Met683 and Tyr691. Residue Trp692 participates in phylloquinone binding. A helical transmembrane segment spans residues 724–744 (AVGVTHYLLGGIATTWAFFLA).

Belongs to the PsaA/PsaB family. In terms of assembly, the PsaA/B heterodimer binds the P700 chlorophyll special pair and subsequent electron acceptors. PSI consists of a core antenna complex that captures photons, and an electron transfer chain that converts photonic excitation into a charge separation. The eukaryotic PSI reaction center is composed of at least 11 subunits. The cofactor is P700 is a chlorophyll a/chlorophyll a' dimer, A0 is one or more chlorophyll a, A1 is one or both phylloquinones and FX is a shared 4Fe-4S iron-sulfur center..

The protein localises to the plastid. Its subcellular location is the chloroplast thylakoid membrane. It catalyses the reaction reduced [plastocyanin] + hnu + oxidized [2Fe-2S]-[ferredoxin] = oxidized [plastocyanin] + reduced [2Fe-2S]-[ferredoxin]. Functionally, psaA and PsaB bind P700, the primary electron donor of photosystem I (PSI), as well as the electron acceptors A0, A1 and FX. PSI is a plastocyanin-ferredoxin oxidoreductase, converting photonic excitation into a charge separation, which transfers an electron from the donor P700 chlorophyll pair to the spectroscopically characterized acceptors A0, A1, FX, FA and FB in turn. Oxidized P700 is reduced on the lumenal side of the thylakoid membrane by plastocyanin. In Draba nemorosa (Woodland whitlowgrass), this protein is Photosystem I P700 chlorophyll a apoprotein A1.